The chain runs to 2489 residues: MSMLPWSQIRDVSKLLLGFMLFIISIQKIASILMSWILMLRHSTIRKISFGYFFGTSIRRAFILTDFAQIYIGKITLRIGWKPGIVFHNVDLKLFGKDSHITAHSTKDSRTYFNPRDQTFTFVINRRVLSILKLVFSFSTFFHTLALTVPNGKQYKLNIGSITISHPHDDTIKLEAFLHDFTHPETKDTLNHTGFFMVCKIGKEDDTGSNCTKVILKNWKSSLKISDVCWHLPEKKGKNLHSEPVEPFSAGDDAEMLTSYRKMLKPFHYPLKTLNILDLKVENVKLIYKKKFTIRISSAQLYLESISILNNVSALELLPLNKPTWGDFELSLSANAVVVDIDGNTAVRIPFGNVILTSDILLFLLDNVPLRRTKVSSILNIINPSVFLTIHQVLEVLHLVDKFDSPETSSCTNTNDRSLNILDLDIDRLPSFNFELLMSNFISRLHISDEENVTFKVFSTHALFSRNNLSMTPKKGQVMQIRPDWPFAKTALVSDQLSNYIKIVGTSLSYLRIPTEQDANPVSIPVCGFERLDTFLDEFSNSKLIVQSTLRHSYVSLENIEVLHTLSRAFDKIYLLISSRTKRNAAHKANGGKLGDLNEAKKTFNWSLKLRMKDISCSLLVAGFLPKNLDPVEAENFNLSDVTRGAKVVFTESILLADSQEKNFTIIDASVYRFMDGTTYKPSPEVIIQFTNLLLSFNDSDEIHFSLPKIKFKMDVNIIWLWFYIRSIWIKFRPNSKLSRNSVSSVKSVNVLDRLRVDIGKMIIELTLPHNTEVLLIFERIGLSSSTKNLTIASLSAYVVSVYVKHIKVYVSLLNINDFELDTEELICKKSAVINTSLIHFHAEYHFRFYMITDNIVTLYKSFKQIKLAFSNLNEFKRLYPQQQFPKKVPNLHICCQDFLIDIEEDPFEQELGLILKVGVLEQRERLKKLEEFKEKLSTYEDMNVRLRSLYDTSRGQSFFPEFYANDQEYEQKAYLRLLENFSTSWIARYRKAKLSFYGMPYRVISREELGTKYHLFTRQKTSTVANLVVKDLDFKLGSPSFPLDNYMDFVYQYGKKVPKSTEYTLLIILGLKIKSALWELRLRDYPIPAISFPDTFTTGDVVFAEKMPAPCALHTVYVPFVSSAQRSPYNDANTIYGLHIIRTINSVKTYFNIRSMVTSSSSARITWGKSLQPGYESLMLWFDFLTKPLIDPSKKLGFWDKFRYLVHGKWIYEFSEESEIHLNIKGSHDPYKITDDGAGLAFCWSGGTTIYVHNSTDPKEFLKIESQRFQLAVPDFAKVSKFDKVFMKLDGRVIWTLGLLFEQGDISKAGDEERFLPNRPHYEIQLMNPDGVADLDHHDTYKGFRTSFIHMSFGVYSSEHGSINSLYLAPYALTHFFKWWNLFHTYTSGPIRQGRLFTDVLQNKTKFGRSLFTIAYQLHLKRLMVTHIYRHITTQYDLEKDRKITFTGLKGRFDSLKIDLHQKRVKLTHTNQKLNKSKPVWKFKMSRGEIDCAEADIRILSTLFDQEAVKEILTSGLDGILEDEPSRPITPQDVEYLRESDWYDYEDYIDLNQVPLGSSLPLKLEAIPLLYSPRISYFRKINDDGYVLAYPFGTEESHNCLIGKNHPELTQEKLATERKREIEEQLKLLHITLSELQSNKGGGSVSGNSERYARELKAEVAELNHRLHTVNTILSDLKISETIPGGNTDGDSSSSLSDTDVNLENAPPIQNRISLLRTNTVESFVSMRKASTMQVESTYDNRFMVHNIELKIDNKIRHHLLEYASSAFERKSMRFAVTYKSVTILKELLGNVLTGVRTSVEDYGSILEDDLASNSEFIEHFEKLIREVPSDDFDYVDNYLFRLISPQVQIKSDVERNAAVILAARDIEMGIIDIVQVYGKSGKRIPVDVDTIVETRYSAVSKDIQLFTLFKKDLEGPEGRFFHKNGYGSDKESDIWPPWIPLEMCFDGSLLDKHVFLKRRSMFLTYVAPNPLFFSANDTSAFSYDSRFRIAFPGLVLTSDCQQYCAVYAIAEDLLSFGSSLDEKVEKLSRILFTDEVRNNLENLDVSVVTALQERIKELYYTRAYLKLHEPRLFMKSGQELTFDIQTSTLKLTLLMTAIKKTYDRMGSGNRVIQKRLRWQVGTDELIWELYDESKTPFVTIGLGPSTFIRSETSDGTNSNKVSISSLQCFNQQENPVYTELLAPFYENSSYNKNAPMVEIFWILGPSVGGISDLQDLIVSLQPLIFKMDHKTSEKLMNYLFPKIEQTSIEPNSPELVPRSSTSSFFSSSPVLRHSLSNGSLSVYDAKDVDSWDLRSIQSKEGIKKHKGDHRKLSASLFVQPDYNINEMVKRSGTFFNVKSIIIRKTLMSVCYKGSHSLLTDVNNLIVRVPVLKYHNKLWSREEFFTALKRDVVRIVLQHLGNIIGNKFLPHKKENKKKTSMEIHRLLSPDSQNRDNSHILEVEGHNSFYSSTHSSDIRSINSDETYNENDGNGVKPFYPVTSEFSKNK.

The next 2 membrane-spanning stretches (helical) occupy residues 19–39 and 128–148; these read FMLF…WILM and VLSI…LALT. Asparagine 191, asparagine 210, asparagine 311, asparagine 452, asparagine 468, asparagine 605, asparagine 638, asparagine 663, asparagine 698, asparagine 789, asparagine 835, asparagine 981, asparagine 1255, asparagine 1404, and asparagine 1476 each carry an N-linked (GlcNAc...) asparagine glycan. A coiled-coil region spans residues 1610 to 1676; sequence LTQEKLATER…RLHTVNTILS (67 aa). Positions 1685–1704 are disordered; the sequence is PGGNTDGDSSSSLSDTDVNL. Residues 1690 to 1704 show a composition bias toward low complexity; sequence DGDSSSSLSDTDVNL. 2 N-linked (GlcNAc...) asparagine glycosylation sites follow: asparagine 1978 and asparagine 2189. A phosphoserine mark is found at serine 2254 and serine 2278. Asparagine 2279 carries N-linked (GlcNAc...) asparagine glycosylation. Polar residues predominate over residues 2451 to 2471; it reads SSTHSSDIRSINSDETYNEND. The disordered stretch occupies residues 2451–2489; it reads SSTHSSDIRSINSDETYNENDGNGVKPFYPVTSEFSKNK.

It localises to the cell membrane. The protein localises to the endoplasmic reticulum membrane. It is found in the mitochondrion membrane. In terms of biological role, tube-forming lipid transport protein which may bind to phosphatidylinositols and may affect phosphatidylinositol-4,5-bisphosphate (PtdIns-4,5-P2) distribution. The sequence is that of Protein YPR117W from Saccharomyces cerevisiae (strain ATCC 204508 / S288c) (Baker's yeast).